The following is a 96-amino-acid chain: Aspartyl/glutamyl-tRNA(Asn/Gln) amidotransferase subunit C (96 aa).

This sequence belongs to the GatC family. In terms of assembly, heterotrimer of A, B and C subunits.

The enzyme catalyses L-glutamyl-tRNA(Gln) + L-glutamine + ATP + H2O = L-glutaminyl-tRNA(Gln) + L-glutamate + ADP + phosphate + H(+). It carries out the reaction L-aspartyl-tRNA(Asn) + L-glutamine + ATP + H2O = L-asparaginyl-tRNA(Asn) + L-glutamate + ADP + phosphate + 2 H(+). Allows the formation of correctly charged Asn-tRNA(Asn) or Gln-tRNA(Gln) through the transamidation of misacylated Asp-tRNA(Asn) or Glu-tRNA(Gln) in organisms which lack either or both of asparaginyl-tRNA or glutaminyl-tRNA synthetases. The reaction takes place in the presence of glutamine and ATP through an activated phospho-Asp-tRNA(Asn) or phospho-Glu-tRNA(Gln). The sequence is that of Aspartyl/glutamyl-tRNA(Asn/Gln) amidotransferase subunit C from Bacillus licheniformis (strain ATCC 14580 / DSM 13 / JCM 2505 / CCUG 7422 / NBRC 12200 / NCIMB 9375 / NCTC 10341 / NRRL NRS-1264 / Gibson 46).